A 394-amino-acid polypeptide reads, in one-letter code: Na(+)/H(+) antiporter NhaA (394 aa).

Transmembrane regions (helical) follow at residues 14-34 (AGGLILIIAAAIALLMANSAL), 59-79 (LLLWINDGLMAVFFLVVGLEV), 95-115 (VFPAIAALGGMLAPALIYLLF), 125-145 (GWAIPAATDIAFALGVMALLG), 154-174 (VFLLALAIIDDLGVIIIIALF), 179-199 (VSLQSLGIAAAAIALLAYMNW), 213-233 (LVLWVCILKSGVHATLAGVIV), 254-274 (GLHPWVAYLILPLFAFANAGV), 292-312 (IATGLFIGKPLGIFTFSWLAV), 328-348 (IFAVSVLCGIGFTMSIFIASL), and 363-383 (LGILLGSTTAAVVGYSLLRLV).

Belongs to the NhaA Na(+)/H(+) (TC 2.A.33) antiporter family.

The protein resides in the cell inner membrane. The catalysed reaction is Na(+)(in) + 2 H(+)(out) = Na(+)(out) + 2 H(+)(in). In terms of biological role, na(+)/H(+) antiporter that extrudes sodium in exchange for external protons. This Yersinia pseudotuberculosis serotype O:1b (strain IP 31758) protein is Na(+)/H(+) antiporter NhaA.